The primary structure comprises 216 residues: Guanylate kinase (216 aa).

Positions 15 to 193 constitute a Guanylate kinase-like domain; it reads GNLFMVVAPS…ALEELRNVVR (179 aa). 22–29 provides a ligand contact to ATP; that stretch reads APSGAGKS.

It belongs to the guanylate kinase family.

It is found in the cytoplasm. The catalysed reaction is GMP + ATP = GDP + ADP. Essential for recycling GMP and indirectly, cGMP. This Cupriavidus pinatubonensis (strain JMP 134 / LMG 1197) (Cupriavidus necator (strain JMP 134)) protein is Guanylate kinase.